Here is a 1194-residue protein sequence, read N- to C-terminus: DNA polymerase catalytic subunit (1194 aa).

The protein belongs to the DNA polymerase type-B family. As to quaternary structure, forms a complex with the ssDNA-binding protein, the DNA polymerase processivity factor, and the alkaline exonuclease. Interacts with the helicase-primase complex composed of the primase, the helicase and the primase-associated factor; this interaction may coordinate leading and lagging strand DNA synthesis at the replication fork.

It localises to the host nucleus. It carries out the reaction DNA(n) + a 2'-deoxyribonucleoside 5'-triphosphate = DNA(n+1) + diphosphate. It catalyses the reaction Endonucleolytic cleavage to 5'-phosphomonoester.. Functionally, replicates viral genomic DNA. The replication complex is composed of six viral proteins: the DNA polymerase, processivity factor, primase, primase-associated factor, helicase, and ssDNA-binding protein. Additionally, the polymerase contains an intrinsic ribonuclease H (RNase H) activity that specifically degrades RNA/DNA heteroduplexes or duplex DNA substrates in the 5' to 3' direction. Therefore, it can catalyze the excision of the RNA primers that initiate the synthesis of Okazaki fragments at a replication fork during viral DNA replication. The sequence is that of DNA polymerase catalytic subunit from Varicella-zoster virus (strain Oka vaccine) (HHV-3).